Reading from the N-terminus, the 216-residue chain is Protein-L-isoaspartate O-methyltransferase (216 aa).

Residue Ser-66 is part of the active site.

Belongs to the methyltransferase superfamily. L-isoaspartyl/D-aspartyl protein methyltransferase family.

It is found in the cytoplasm. The enzyme catalyses [protein]-L-isoaspartate + S-adenosyl-L-methionine = [protein]-L-isoaspartate alpha-methyl ester + S-adenosyl-L-homocysteine. In terms of biological role, catalyzes the methyl esterification of L-isoaspartyl residues in peptides and proteins that result from spontaneous decomposition of normal L-aspartyl and L-asparaginyl residues. It plays a role in the repair and/or degradation of damaged proteins. The polypeptide is Protein-L-isoaspartate O-methyltransferase (Colwellia psychrerythraea (strain 34H / ATCC BAA-681) (Vibrio psychroerythus)).